A 181-amino-acid polypeptide reads, in one-letter code: Transcriptional repressor NrdR (181 aa).

A zinc finger lies at Cys3 to Cys34. An ATP-cone domain is found at Ile49–Asp139.

The protein belongs to the NrdR family. It depends on Zn(2+) as a cofactor.

Its function is as follows. Negatively regulates transcription of bacterial ribonucleotide reductase nrd genes and operons by binding to NrdR-boxes. The chain is Transcriptional repressor NrdR from Picosynechococcus sp. (strain ATCC 27264 / PCC 7002 / PR-6) (Agmenellum quadruplicatum).